Here is a 193-residue protein sequence, read N- to C-terminus: Holliday junction branch migration complex subunit RuvA (193 aa).

The segment at 1–63 (MIGKLTGTVT…ENINKLYGFE (63 aa)) is domain I. The interval 64–148 (CRKSQEVARM…GIASSTNVHI (85 aa)) is domain II. The flexible linker stretch occupies residues 149–150 (AS). Residues 150-193 (SEAVSALVKLGFQHKPSHKVVMEIMTKRPAIEIAELITLALKML) are domain III.

The protein belongs to the RuvA family. In terms of assembly, homotetramer. Forms an RuvA(8)-RuvB(12)-Holliday junction (HJ) complex. HJ DNA is sandwiched between 2 RuvA tetramers; dsDNA enters through RuvA and exits via RuvB. An RuvB hexamer assembles on each DNA strand where it exits the tetramer. Each RuvB hexamer is contacted by two RuvA subunits (via domain III) on 2 adjacent RuvB subunits; this complex drives branch migration. In the full resolvosome a probable DNA-RuvA(4)-RuvB(12)-RuvC(2) complex forms which resolves the HJ.

The protein resides in the cytoplasm. The RuvA-RuvB-RuvC complex processes Holliday junction (HJ) DNA during genetic recombination and DNA repair, while the RuvA-RuvB complex plays an important role in the rescue of blocked DNA replication forks via replication fork reversal (RFR). RuvA specifically binds to HJ cruciform DNA, conferring on it an open structure. The RuvB hexamer acts as an ATP-dependent pump, pulling dsDNA into and through the RuvAB complex. HJ branch migration allows RuvC to scan DNA until it finds its consensus sequence, where it cleaves and resolves the cruciform DNA. This is Holliday junction branch migration complex subunit RuvA from Neorickettsia sennetsu (strain ATCC VR-367 / Miyayama) (Ehrlichia sennetsu).